An 88-amino-acid polypeptide reads, in one-letter code: UPF0297 protein BT9727_4120 (88 aa).

The protein belongs to the UPF0297 family.

The sequence is that of UPF0297 protein BT9727_4120 from Bacillus thuringiensis subsp. konkukian (strain 97-27).